A 274-amino-acid polypeptide reads, in one-letter code: Diaminopimelate epimerase (274 aa).

Residues N13, Q45, and N63 each contribute to the substrate site. C72 (proton donor) is an active-site residue. Substrate contacts are provided by residues 73-74, N158, N191, and 209-210; these read GN and ER. C218 (proton acceptor) is an active-site residue. Residue 219–220 participates in substrate binding; it reads GT.

This sequence belongs to the diaminopimelate epimerase family. As to quaternary structure, homodimer.

Its subcellular location is the cytoplasm. It carries out the reaction (2S,6S)-2,6-diaminopimelate = meso-2,6-diaminopimelate. It participates in amino-acid biosynthesis; L-lysine biosynthesis via DAP pathway; DL-2,6-diaminopimelate from LL-2,6-diaminopimelate: step 1/1. Catalyzes the stereoinversion of LL-2,6-diaminopimelate (L,L-DAP) to meso-diaminopimelate (meso-DAP), a precursor of L-lysine and an essential component of the bacterial peptidoglycan. This is Diaminopimelate epimerase from Pelagibacter ubique (strain HTCC1062).